The sequence spans 216 residues: Adenylate kinase (216 aa).

ATP is bound at residue 10 to 15 (GAGKGT). An NMP region spans residues 30–59 (STGDIFRAAIKNQTPMGVEAKKFIDKGELV). AMP-binding positions include Thr31, Arg36, 57-59 (ELV), 85-88 (GFPR), and Gln92. The LID stretch occupies residues 126-164 (GRFICRNCGTTYHRLYNPTKVEGTCDVCGGHDFYQRDDD). Position 127 (Arg127) interacts with ATP. Zn(2+) is bound by residues Cys130 and Cys133. An ATP-binding site is contributed by 136-137 (TY). Cys150 and Cys153 together coordinate Zn(2+). AMP-binding residues include Arg161 and Arg172. Gln200 is a binding site for ATP.

The protein belongs to the adenylate kinase family. Monomer.

It localises to the cytoplasm. It carries out the reaction AMP + ATP = 2 ADP. It participates in purine metabolism; AMP biosynthesis via salvage pathway; AMP from ADP: step 1/1. Catalyzes the reversible transfer of the terminal phosphate group between ATP and AMP. Plays an important role in cellular energy homeostasis and in adenine nucleotide metabolism. The sequence is that of Adenylate kinase from Limosilactobacillus fermentum (strain NBRC 3956 / LMG 18251) (Lactobacillus fermentum).